Reading from the N-terminus, the 774-residue chain is MRRRVALSTAIALLVGAQLCVAAEVEVAGAGGGVVRRRSLHQPFFPIEWSPPPPMSGSEAVPPPPPAAAASATTGGGRSTTTVMNTVAIALSAGLVALAVASYSCCLLLRRRRREEEDDGDRAAKRAVGAAAAVAARVPSDVGSSSRQHRSPPPSSTASDAIYLDPLTTLVEVRQHEKSPDLRPLPLLKQPSPDLRPLPPLKRPESQPPPPPPSTPPLTTTGYSTDEEDQATYYTAPKTAMSSFSRSTSQHSTLEQTAMPPMAAPAPPQTNPPRPVRPPPPPPPPRQRLLRPLPAESPPPAALANLELTGSPVKPAVEDRGGENSGAARPPKPPHLKPLHWDKLRAISGRTTVWDQVKNSDTFRVDEEAMESLFLNSGGGGAGSSDPAARRGGSGKQERRLLDPKRLQNVAIMLKSLNVAADEVIGALVRGNPEDLGSEFYETLAKMAPTKEEELKLKGYSGDLSKIDPAERFLKDVLGVPFAFERVDAMLYRANFDNEVNYLRKSFGTLEAACEELRSSKLFLKLLDAVLKTGNRMNDGTNRGEARAFKLDTLLKLADIKSTDGRTTLLHFVVKEIIRSEGFDSDQSAVNPGSGSKEQFKRDGLKLLAGLSSELSNVKRAATLEMDTLSGNILRLEADLEKVKLVLQLKETCSDQGASENFFQAMVVFLRRAEAEIKNMKTAEENALRLVKETTEYFHGDATKEEPHPLRIFVVVDEFLLILDRVCRDVGRTPERVMMGSGKSFRVPAGTSLPPHRNENRRVLSSSDEDSSSS.

Residues 1 to 22 (MRRRVALSTAIALLVGAQLCVA) form the signal peptide. Residues 51–67 (PPPPMSGSEAVPPPPPA) show a composition bias toward pro residues. Positions 51–78 (PPPPMSGSEAVPPPPPAAAASATTGGGR) are disordered. Low complexity predominate over residues 68 to 78 (AAASATTGGGR). The chain crosses the membrane as a helical span at residues 89 to 109 (IALSAGLVALAVASYSCCLLL). 4 disordered regions span residues 130–163 (AAAA…DAIY), 176–338 (HEKS…HLKP), 374–402 (FLNS…RRLL), and 740–774 (GSGK…SSSS). Residues 194-216 (DLRPLPPLKRPESQPPPPPPSTP) show a composition bias toward pro residues. The span at 242-261 (SSFSRSTSQHSTLEQTAMPP) shows a compositional bias: low complexity. The segment covering 262–286 (MAAPAPPQTNPPRPVRPPPPPPPPR) has biased composition (pro residues). One can recognise an FH2 domain in the interval 326–749 (GAARPPKPPH…GSGKSFRVPA (424 aa)).

It belongs to the formin-like family. Class-I subfamily.

Its subcellular location is the membrane. The chain is Formin-like protein 13 (FH13) from Oryza sativa subsp. japonica (Rice).